A 402-amino-acid chain; its full sequence is Plasminogen activator inhibitor 1 (402 aa).

A signal peptide spans 1–23 (MRMSLVFACLAMGLALTFAEGSA). Asn-232, Asn-288, and Asn-352 each carry an N-linked (GlcNAc...) asparagine glycan.

The protein belongs to the serpin family. In terms of assembly, forms a heterodimer with TMPRSS7. Interacts with VTN. Binds LRP1B; binding is followed by internalization and degradation. Interacts with PPP1CB. In complex with PLAU/uPA, interacts with PLAUR/uPAR. Interacts with SORL1 and LRP1, either alone or in complex with PLAU; these interactions are abolished in the presence of LRPAP1/RAP. The ternary complex composed of PLAUR-PLAU-PAI1 also interacts with SORL1. Interacts with PLAT/tPA. Also interacts with SORL1, when complexed to PLAT/tPA.

The protein localises to the secreted. Serine protease inhibitor. Inhibits TMPRSS7. Is a primary inhibitor of tissue-type plasminogen activator (PLAT) and urokinase-type plasminogen activator (PLAU). As PLAT inhibitor, it is required for fibrinolysis down-regulation and is responsible for the controlled degradation of blood clots. As PLAU inhibitor, it is involved in the regulation of cell adhesion and spreading. Acts as a regulator of cell migration, independently of its role as protease inhibitor. It is required for stimulation of keratinocyte migration during cutaneous injury repair. It is involved in cellular and replicative senescence. Plays a role in alveolar type 2 cells senescence in the lung. Is involved in the regulation of cementogenic differentiation of periodontal ligament stem cells, and regulates odontoblast differentiation and dentin formation during odontogenesis. The sequence is that of Plasminogen activator inhibitor 1 (SERPINE1) from Sus scrofa (Pig).